Consider the following 359-residue polypeptide: Alanine racemase (359 aa).

Lys35 serves as the catalytic Proton acceptor; specific for D-alanine. Lys35 carries the post-translational modification N6-(pyridoxal phosphate)lysine. Arg131 contributes to the substrate binding site. Tyr253 (proton acceptor; specific for L-alanine) is an active-site residue. Substrate is bound at residue Met301.

The protein belongs to the alanine racemase family. Requires pyridoxal 5'-phosphate as cofactor.

It carries out the reaction L-alanine = D-alanine. It participates in amino-acid biosynthesis; D-alanine biosynthesis; D-alanine from L-alanine: step 1/1. In terms of biological role, catalyzes the interconversion of L-alanine and D-alanine. May also act on other amino acids. In Laribacter hongkongensis (strain HLHK9), this protein is Alanine racemase (alr).